Consider the following 142-residue polypeptide: Large ribosomal subunit protein uL11 (142 aa).

Belongs to the universal ribosomal protein uL11 family. In terms of assembly, part of the ribosomal stalk of the 50S ribosomal subunit. Interacts with L10 and the large rRNA to form the base of the stalk. L10 forms an elongated spine to which L12 dimers bind in a sequential fashion forming a multimeric L10(L12)X complex. In terms of processing, one or more lysine residues are methylated.

Forms part of the ribosomal stalk which helps the ribosome interact with GTP-bound translation factors. This Hahella chejuensis (strain KCTC 2396) protein is Large ribosomal subunit protein uL11.